A 149-amino-acid chain; its full sequence is Pleckstrin homology domain-containing family J member 1 (149 aa).

Residues 15–108 (PAEMAAELGM…WMEALRRASY (94 aa)) form the PH domain.

Expressed in testis and liver.

The chain is Pleckstrin homology domain-containing family J member 1 (PLEKHJ1) from Homo sapiens (Human).